The sequence spans 172 residues: Cyclin-L1 (172 aa).

The disordered stretch occupies residues 1 to 36; that stretch reads MASGPHSTATAAAAASSAAPSAGGSSSGTTTTTTTT. Positions 88 to 168 are cyclin-like; sequence ELIQAAGILL…LRGKSDQLHL (81 aa).

It belongs to the cyclin family. Cyclin L subfamily. Interacts with POLR2A via its hyperphosphorylated C-terminal domain (CTD). Interacts with CDK11A, CDK11B, CDK12 and CDK13. May form a ternary complex with CDK11B and casein kinase II (CKII). Interacts with pre-mRNA-splicing factors, including at least SRSF1, SRSF2 and SRSF7/SLU7.

Its subcellular location is the nucleus speckle. The protein localises to the nucleus. It is found in the nucleoplasm. Functionally, involved in pre-mRNA splicing. Functions in association with cyclin-dependent kinases (CDKs). May play a role in the regulation of RNA polymerase II (pol II). Inhibited by the CDK-specific inhibitor CDKN1A/p21. This is Cyclin-L1 (CCNL1) from Pongo abelii (Sumatran orangutan).